The following is a 356-amino-acid chain: Phosphoribosylformylglycinamidine cyclo-ligase (356 aa).

It belongs to the AIR synthase family.

The protein resides in the cytoplasm. It carries out the reaction 2-formamido-N(1)-(5-O-phospho-beta-D-ribosyl)acetamidine + ATP = 5-amino-1-(5-phospho-beta-D-ribosyl)imidazole + ADP + phosphate + H(+). Its pathway is purine metabolism; IMP biosynthesis via de novo pathway; 5-amino-1-(5-phospho-D-ribosyl)imidazole from N(2)-formyl-N(1)-(5-phospho-D-ribosyl)glycinamide: step 2/2. The sequence is that of Phosphoribosylformylglycinamidine cyclo-ligase from Acinetobacter baumannii (strain AB307-0294).